The chain runs to 226 residues: uncharacterized protein (226 aa).

This is an uncharacterized protein from Bacillus subtilis (strain 168).